Reading from the N-terminus, the 562-residue chain is Glutamine--tRNA ligase (562 aa).

Positions 35-45 (PEPNGYLHIGH) match the 'HIGH' region motif. ATP contacts are provided by residues 36–38 (EPN) and 42–48 (HIGHAKS). Residues aspartate 68 and tyrosine 213 each coordinate L-glutamine. ATP is bound by residues threonine 232 and 264 to 265 (RL). Residues 271–275 (ITSKR) carry the 'KMSKS' region motif.

This sequence belongs to the class-I aminoacyl-tRNA synthetase family. In terms of assembly, monomer.

Its subcellular location is the cytoplasm. It carries out the reaction tRNA(Gln) + L-glutamine + ATP = L-glutaminyl-tRNA(Gln) + AMP + diphosphate. The protein is Glutamine--tRNA ligase of Neisseria gonorrhoeae (strain ATCC 700825 / FA 1090).